A 565-amino-acid polypeptide reads, in one-letter code: Periplasmic trehalase (565 aa).

The signal sequence occupies residues 1–30 (MKSPAPSRPQKMALIPACIFLCFAALSVQA). Residues Arg-152, 159 to 160 (WD), Asn-196, 205 to 207 (RSQ), 277 to 279 (RPE), and Gly-310 contribute to the substrate site. Residues Asp-312 and Glu-496 each act as proton donor/acceptor in the active site. Glu-511 contacts substrate. Residues 539–565 (CDNVPATRPLSESTTQPVKQKEAEPTP) are disordered.

The protein belongs to the glycosyl hydrolase 37 family. As to quaternary structure, monomer.

It is found in the periplasm. It carries out the reaction alpha,alpha-trehalose + H2O = alpha-D-glucose + beta-D-glucose. Functionally, provides the cells with the ability to utilize trehalose at high osmolarity by splitting it into glucose molecules that can subsequently be taken up by the phosphotransferase-mediated uptake system. This is Periplasmic trehalase from Escherichia coli O17:K52:H18 (strain UMN026 / ExPEC).